A 331-amino-acid polypeptide reads, in one-letter code: Ornithine carbamoyltransferase (331 aa).

Residues 55–58 (STRT), Q82, R106, and 133–136 (HPTQ) contribute to the carbamoyl phosphate site. L-ornithine is bound by residues N166, D230, and 234 to 235 (SM). Carbamoyl phosphate is bound by residues 272 to 273 (CL) and R317.

It belongs to the aspartate/ornithine carbamoyltransferase superfamily. OTCase family.

Its subcellular location is the cytoplasm. The enzyme catalyses carbamoyl phosphate + L-ornithine = L-citrulline + phosphate + H(+). The protein operates within amino-acid biosynthesis; L-arginine biosynthesis; L-arginine from L-ornithine and carbamoyl phosphate: step 1/3. Functionally, reversibly catalyzes the transfer of the carbamoyl group from carbamoyl phosphate (CP) to the N(epsilon) atom of ornithine (ORN) to produce L-citrulline. In Neisseria meningitidis serogroup C / serotype 2a (strain ATCC 700532 / DSM 15464 / FAM18), this protein is Ornithine carbamoyltransferase.